The following is a 232-amino-acid chain: Y-linked testis-specific protein 1 (232 aa).

The protein belongs to the SPIN/STSY family. As to expression, expressed in testis (at protein level).

The chain is Y-linked testis-specific protein 1 (Ssty1) from Mus musculus (Mouse).